The sequence spans 976 residues: Mast/stem cell growth factor receptor Kit (976 aa).

A signal peptide spans 1–25; that stretch reads MRGARGAWDFLCVLLLLLRVQTGSS. The Extracellular segment spans residues 26-524; that stretch reads QPSVSPGEPS…QIHPHTLFTP (499 aa). Ig-like C2-type domains follow at residues 27–112, 121–205, 212–308, 317–410, and 413–507; these read PSVS…VFVR, DRSL…LKVR, PVVS…LEVV, PMIN…VYVN, and PEIL…FNFA. A disulfide bridge connects residues C58 and C97. N-linked (GlcNAc...) asparagine glycans are attached at residues N130 and N145. 3 disulfide bridges follow: C136–C186, C151–C183, and C233–C290. 8 N-linked (GlcNAc...) asparagine glycosylation sites follow: N283, N293, N300, N320, N352, N367, N463, and N486. Residues C428 and C491 are joined by a disulfide bond. Residues 525–545 traverse the membrane as a helical segment; that stretch reads LLIGFVIVAGMMCIIVMILTY. The Cytoplasmic portion of the chain corresponds to 546–976; sequence KYLQKPMYEV…SQPLLVHDDV (431 aa). Phosphotyrosine; by autocatalysis is present on residues Y547, Y553, Y568, and Y570. A Mg(2+)-binding site is contributed by Y568. Residues 568–570 are important for interaction with phosphotyrosine-binding proteins; the sequence is YVY. One can recognise a Protein kinase domain in the interval 589-937; sequence LSFGKTLGAG…ISESTNHIYS (349 aa). ATP-binding positions include 596–603, K623, and 671–677; these read GAGAFGKV and EYCCYGD. 3 positions are modified to phosphotyrosine; by autocatalysis: Y703, Y721, and Y730. Phosphoserine; by PKC/PRKCA is present on residues S741 and S746. D792 functions as the Proton acceptor in the catalytic mechanism. An ATP-binding site is contributed by R796. N797 and D810 together coordinate Mg(2+). Phosphoserine is present on S821. Y823 is subject to Phosphotyrosine; by autocatalysis. A Phosphoserine modification is found at S891. Residues Y900 and Y936 each carry the phosphotyrosine; by autocatalysis modification. S959 carries the post-translational modification Phosphoserine.

The protein belongs to the protein kinase superfamily. Tyr protein kinase family. CSF-1/PDGF receptor subfamily. As to quaternary structure, monomer in the absence of bound KITLG/SCF. Homodimer in the presence of bound KITLG/SCF, forming a heterotetramer with two KITLG/SCF molecules. Interacts (via phosphorylated tyrosine residues) with the adapter proteins GRB2 and GRB7 (via SH2 domain), and SH2B2/APS. Interacts (via C-terminus) with MPDZ (via the tenth PDZ domain). Interacts (via phosphorylated tyrosine residues) with PIK3R1 and PIK3 catalytic subunit. Interacts (via phosphorylated tyrosine) with CRK (isoform Crk-II), FYN, SHC1 and MATK/CHK (via SH2 domain). Interacts with LYN and FES/FPS. Interacts (via phosphorylated tyrosine residues) with the protein phosphatases PTPN6/SHP-1 (via SH2 domain), PTPN11/SHP-2 (via SH2 domain) and PTPRU. Interacts with PLCG1. Interacts with DOK1 and TEC. Interacts (KITLG/SCF-bound) with IL1RL1. Interacts with IL1RAP (independent of stimulation with KITLG/SCF). A mast cell-specific KITLG/SCF-induced interleukin-33 signaling complex contains IL1RL1, IL1RAP, KIT and MYD88. Post-translationally, ubiquitinated by SOCS6. KIT is rapidly ubiquitinated after autophosphorylation induced by KITLG/SCF binding, leading to internalization and degradation. In terms of processing, autophosphorylated on tyrosine residues. KITLG/SCF binding enhances autophosphorylation. Isoform 1 shows low levels of tyrosine phosphorylation in the absence of added KITLG/SCF (in vitro). Kinase activity is down-regulated by phosphorylation on serine residues by protein kinase C family members. Phosphorylation at Tyr-568 is required for interaction with PTPN11/SHP-2, CRK (isoform Crk-II) and members of the SRC tyrosine-protein kinase family. Phosphorylation at Tyr-570 is required for interaction with PTPN6/SHP-1. Phosphorylation at Tyr-703, Tyr-823 and Tyr-936 is important for interaction with GRB2. Phosphorylation at Tyr-721 is important for interaction with PIK3R1. Phosphorylation at Tyr-823 and Tyr-936 is important for interaction with GRB7. As to expression, in testis, detected in spermatogonia in the basal layer and in interstitial Leydig cells but not in Sertoli cells or spermatocytes inside the seminiferous tubules (at protein level). Expression is maintained in ejaculated spermatozoa (at protein level).

The protein resides in the cell membrane. Its subcellular location is the cytoplasm. The enzyme catalyses L-tyrosyl-[protein] + ATP = O-phospho-L-tyrosyl-[protein] + ADP + H(+). With respect to regulation, present in an inactive conformation in the absence of bound ligand. KITLG/SCF binding leads to dimerization and activation by autophosphorylation on tyrosine residues. Activity is down-regulated by PRKCA-mediated phosphorylation on serine residues. Inhibited by imatinib/STI-571 (Gleevec) and sunitinib; these compounds maintain the kinase in an inactive conformation. Tyrosine-protein kinase that acts as a cell-surface receptor for the cytokine KITLG/SCF and plays an essential role in the regulation of cell survival and proliferation, hematopoiesis, stem cell maintenance, gametogenesis, mast cell development, migration and function, and in melanogenesis. In response to KITLG/SCF binding, KIT can activate several signaling pathways. Phosphorylates PIK3R1, PLCG1, SH2B2/APS and CBL. Activates the AKT1 signaling pathway by phosphorylation of PIK3R1, the regulatory subunit of phosphatidylinositol 3-kinase. Activated KIT also transmits signals via GRB2 and activation of RAS, RAF1 and the MAP kinases MAPK1/ERK2 and/or MAPK3/ERK1. Promotes activation of STAT family members STAT1, STAT3, STAT5A and STAT5B. Activation of PLCG1 leads to the production of the cellular signaling molecules diacylglycerol and inositol 1,4,5-trisphosphate. KIT signaling is modulated by protein phosphatases, and by rapid internalization and degradation of the receptor. Activated KIT promotes phosphorylation of the protein phosphatases PTPN6/SHP-1 and PTPRU, and of the transcription factors STAT1, STAT3, STAT5A and STAT5B. Promotes phosphorylation of PIK3R1, CBL, CRK (isoform Crk-II), LYN, MAPK1/ERK2 and/or MAPK3/ERK1, PLCG1, SRC and SHC1. This chain is Mast/stem cell growth factor receptor Kit (KIT), found in Homo sapiens (Human).